The following is a 1001-amino-acid chain: DNA topoisomerase 3-alpha (1001 aa).

The Toprim domain maps to 35–179 (KVLCVAEKND…NLQVLRARFS (145 aa)). The Topo IA-type catalytic domain maps to 197–617 (DQRVSDAVDV…QQVQKYKQVF (421 aa)). Y362 serves as the catalytic O-(5'-phospho-DNA)-tyrosine intermediate. The disordered stretch occupies residues 400 to 424 (GGPTPRNGNKSDQAHPPIHPTKYTN). The segment at 658–685 (CPQCNKDMVLKTKKNGGFYLSCMGFPEC) adopts a C4-type zinc-finger fold. Residues 774–792 (RMDNSQHPQPADSRQTGSS) are compositionally biased toward polar residues. Positions 774-810 (RMDNSQHPQPADSRQTGSSKALAQTLPPPTAAGESNS) are disordered. Residues C813, C815, C838, C843, C897, C899, C922, and C930 each contribute to the Zn(2+) site. 2 GRF-type zinc fingers span residues 813–852 (CNCGQEAVLLTVRKEGPNRGRQFFKCNGGSCNFFLWADSP) and 897–939 (CLCS…VDEN). The segment at 937–1001 (DENTAPGTSG…HTRPFCPQNR (65 aa)) is disordered. The span at 953 to 964 (DRGRTLESEARS) shows a compositional bias: basic and acidic residues.

The protein belongs to the type IA topoisomerase family. As to quaternary structure, binds ssDNA. Interacts (via N-terminal region) with BLM; the interaction is direct. Directly interacts with RMI1. Component of the RMI complex, containing at least TOP3A, RMI1 and RMI2. The RMI complex interacts with BLM. Mg(2+) is required as a cofactor. As to expression, high expression is found in testis, heart, skeletal muscle and pancreas.

It is found in the mitochondrion matrix. The catalysed reaction is ATP-independent breakage of single-stranded DNA, followed by passage and rejoining.. Its function is as follows. Releases the supercoiling and torsional tension of DNA introduced during the DNA replication and transcription by transiently cleaving and rejoining one strand of the DNA duplex. Introduces a single-strand break via transesterification at a target site in duplex DNA. The scissile phosphodiester is attacked by the catalytic tyrosine of the enzyme, resulting in the formation of a DNA-(5'-phosphotyrosyl)-enzyme intermediate and the expulsion of a 3'-OH DNA strand. The free DNA strand then undergoes passage around the unbroken strand thus removing DNA supercoils. Finally, in the religation step, the DNA 3'-OH attacks the covalent intermediate to expel the active-site tyrosine and restore the DNA phosphodiester backbone. As an essential component of the RMI complex it is involved in chromosome separation and the processing of homologous recombination intermediates to limit DNA crossover formation in cells. Has DNA decatenation activity. It is required for mtDNA decatenation and segregation after completion of replication, in a process that does not require BLM, RMI1 and RMI2. The polypeptide is DNA topoisomerase 3-alpha (TOP3A) (Homo sapiens (Human)).